We begin with the raw amino-acid sequence, 374 residues long: Nudix hydrolase 20, chloroplastic (374 aa).

Residues 1–49 (MASGFCSLALTVTTSLFSSHAITRRVLPILRWRSSSMSLSPLRHSRALS) constitute a chloroplast transit peptide. The Nudix hydrolase domain occupies 205 to 346 (GYGVHMNGYV…KANCSLVIID (142 aa)). The Nudix box motif lies at 244 to 265 (GGLPHGISCGGNLVKECEEEAG). Mg(2+)-binding residues include glutamate 259 and glutamate 263.

Belongs to the Nudix hydrolase family. The cofactor is Mg(2+). Mn(2+) is required as a cofactor. In terms of tissue distribution, expressed in leaves and inflorescences.

Its subcellular location is the plastid. The protein localises to the chloroplast. Probably mediates the hydrolysis of some nucleoside diphosphate derivatives. The chain is Nudix hydrolase 20, chloroplastic (NUDT20) from Arabidopsis thaliana (Mouse-ear cress).